The sequence spans 559 residues: Cellulose biosynthesis protein BcsG (559 aa).

4 helical membrane-spanning segments follow: residues 34–54 (LLWA…MAFL), 68–88 (HWIA…LPGP), 113–133 (FINW…LFLS), and 139–159 (TVFV…GPVF).

It is found in the cell membrane. Required for cellulose biosynthesis. This Salmonella typhimurium (strain LT2 / SGSC1412 / ATCC 700720) protein is Cellulose biosynthesis protein BcsG (bcsG).